The chain runs to 120 residues: Cell division protein FtsL (120 aa).

The tract at residues 1–22 is disordered; it reads MSNVAYKSNLEPNRVHREAEQP. The Cytoplasmic portion of the chain corresponds to 1–37; that stretch reads MSNVAYKSNLEPNRVHREAEQPKKQILKRGQMTLGEK. Residues 13 to 22 are compositionally biased toward basic and acidic residues; that stretch reads NRVHREAEQP. The chain crosses the membrane as a helical span at residues 38–58; sequence VIITIALAIVLVVAFRIISVQ. At 59-120 the chain is on the extracellular side; that stretch reads AQIYTVNQEI…GDNVKVVDGQ (62 aa).

The protein belongs to the FtsL family.

The protein localises to the cell membrane. In terms of biological role, essential cell division protein. This is Cell division protein FtsL from Listeria monocytogenes serovar 1/2a (strain ATCC BAA-679 / EGD-e).